A 221-amino-acid polypeptide reads, in one-letter code: Bcl-2-related ovarian killer protein homolog A (221 aa).

Residues 32 to 44 (KVLCRDYIHSRLH) carry the BH4 motif. Positions 64–80 (VSSVLLWLGDELEYLRP) match the BH3 motif. The BH1 signature appears at 110 to 140 (EIFSTEYSRKGLEKHKGVTWGKIVSLYAVAG). The BH2 motif lies at 173–187 (WLKKRGGWADITKCV). The chain crosses the membrane as a helical span at residues 198–218 (WLVTAACACGHYLKAVVFYLL).

The protein belongs to the Bcl-2 family. In terms of tissue distribution, strongest expression in ovary and eye, weaker expression in gut, kidney and brain. Little expression in liver or heart.

The protein resides in the membrane. Functionally, may play a role in apoptosis. Does not appear to show pro-apoptotic activity when expressed ectopically in early embryos. This Danio rerio (Zebrafish) protein is Bcl-2-related ovarian killer protein homolog A.